Here is a 295-residue protein sequence, read N- to C-terminus: uncharacterized protein (295 aa).

NAD(+)-binding positions include 11-25 (GYIGLGNQGAPMAKR) and Thr101. Residue Lys176 is part of the active site. Lys252 is an NAD(+) binding site.

The protein belongs to the HIBADH-related family.

This is an uncharacterized protein from Mycobacterium tuberculosis (strain CDC 1551 / Oshkosh).